Consider the following 337-residue polypeptide: Adenylosuccinate synthetase (337 aa).

Residues 12-18 (GDEGKGK) and 42-44 (GHT) each bind GTP. Asp13 (proton acceptor) is an active-site residue. Residues Asp13 and Gly42 each contribute to the Mg(2+) site. IMP contacts are provided by residues 13–16 (DEGK), 40–43 (NAGH), Thr124, Arg138, Gln176, Thr191, and Arg253. His43 functions as the Proton donor in the catalytic mechanism. 249–255 (TVTGRRR) contacts substrate. GTP-binding positions include Arg255, 281–283 (GVD), and 321–323 (STG).

Belongs to the adenylosuccinate synthetase family. As to quaternary structure, homodimer. The cofactor is Mg(2+).

The protein resides in the cytoplasm. The enzyme catalyses IMP + L-aspartate + GTP = N(6)-(1,2-dicarboxyethyl)-AMP + GDP + phosphate + 2 H(+). It participates in purine metabolism; AMP biosynthesis via de novo pathway; AMP from IMP: step 1/2. Functionally, plays an important role in the de novo pathway of purine nucleotide biosynthesis. Catalyzes the first committed step in the biosynthesis of AMP from IMP. The chain is Adenylosuccinate synthetase from Archaeoglobus fulgidus (strain ATCC 49558 / DSM 4304 / JCM 9628 / NBRC 100126 / VC-16).